A 525-amino-acid chain; its full sequence is GMP synthase [glutamine-hydrolyzing] (525 aa).

Positions Pro8 to Asp206 constitute a Glutamine amidotransferase type-1 domain. Cys85 serves as the catalytic Nucleophile. Catalysis depends on residues His180 and Glu182. Residues Trp207–Arg400 form the GMPS ATP-PPase domain. Ser234–Ser240 serves as a coordination point for ATP.

Homodimer.

The catalysed reaction is XMP + L-glutamine + ATP + H2O = GMP + L-glutamate + AMP + diphosphate + 2 H(+). Its pathway is purine metabolism; GMP biosynthesis; GMP from XMP (L-Gln route): step 1/1. In terms of biological role, catalyzes the synthesis of GMP from XMP. The polypeptide is GMP synthase [glutamine-hydrolyzing] (Legionella pneumophila (strain Paris)).